The following is a 609-amino-acid chain: Spore coat protein homolog 1 (609 aa).

The signal sequence occupies residues 1-17 (MKSLLFVVFIFLTTTYA). N-linked (GlcNAc...) asparagine glycans are attached at residues N82, N397, and N440. The segment at 527-547 (TVTQVPEAPGTDGTPSESTAW) is disordered. The GPI-anchor amidated serine moiety is linked to residue S584. A propeptide spans 585 to 609 (SSSIKRTPCILPLVILASTLFASFF) (removed in mature form).

It localises to the cell membrane. May play a role in cell adhesion. The sequence is that of Spore coat protein homolog 1 from Rhizopus delemar (strain RA 99-880 / ATCC MYA-4621 / FGSC 9543 / NRRL 43880) (Mucormycosis agent).